Consider the following 124-residue polypeptide: Small ribosomal subunit protein uS12 (124 aa).

Residues 1 to 25 (MPTFNQLVRNGRKPPRWKTSSPALE) form a disordered region. 3-methylthioaspartic acid is present on aspartate 89. Residues 104–124 (TAGVANRKQSRSKYGAKRPKS) are disordered. A compositionally biased stretch (basic residues) spans 111–124 (KQSRSKYGAKRPKS).

Belongs to the universal ribosomal protein uS12 family. As to quaternary structure, part of the 30S ribosomal subunit. Contacts proteins S8 and S17. May interact with IF1 in the 30S initiation complex.

With S4 and S5 plays an important role in translational accuracy. In terms of biological role, interacts with and stabilizes bases of the 16S rRNA that are involved in tRNA selection in the A site and with the mRNA backbone. Located at the interface of the 30S and 50S subunits, it traverses the body of the 30S subunit contacting proteins on the other side and probably holding the rRNA structure together. The combined cluster of proteins S8, S12 and S17 appears to hold together the shoulder and platform of the 30S subunit. In Solibacter usitatus (strain Ellin6076), this protein is Small ribosomal subunit protein uS12.